The following is a 553-amino-acid chain: Efflux pump mlcE (553 aa).

Residues 1–19 (MSEPLPPKEGEPRPQKEES) are compositionally biased toward basic and acidic residues. The disordered stretch occupies residues 1 to 29 (MSEPLPPKEGEPRPQKEESQNDTLEATES). N-linked (GlcNAc...) asparagine glycosylation is present at Asn21. The next 13 membrane-spanning stretches (helical) occupy residues 41–61 (LVVA…SIIV), 77–96 (VGWY…PLAG), 101–121 (LLGL…GSVL), 136–156 (AVAG…LSTA), 164–184 (VLIG…PLLG), 196–216 (CFYI…VITI), 245–265 (LVGF…LEWG), 273–293 (SSVI…FVLW), 319–339 (LFMG…PIYF), 352–372 (VYML…GFAI), 376–396 (GYYL…AGLV), 440–460 (ALGI…FLDF), and 516–536 (TFYL…GMGW). N-linked (GlcNAc...) asparagine glycosylation is present at Asn543.

Belongs to the major facilitator superfamily. TCR/Tet family.

Its subcellular location is the membrane. Its function is as follows. Efflux pump; part of the gene cluster that mediates the biosynthesis of compactin, also known as mevastatin or ML-236B, and which acts as a potent competitive inhibitor of HMG-CoA reductase. This chain is Efflux pump mlcE, found in Penicillium citrinum.